The sequence spans 1159 residues: Calcium-activated potassium channel subunit alpha-1 (1159 aa).

Over 1–24 (EPNMDALIIPVTMEVPCDSRGQRM) the chain is Extracellular. The chain crosses the membrane as a helical span at residues 25–45 (WWAFLASSMVTFFGGLFIILL). Residues 46-116 (WRTLKYLWTV…MISAQTLTGR (71 aa)) lie on the Cytoplasmic side of the membrane. Residues C56, C57, and C59 are each lipidated (S-palmitoyl cysteine). The chain crosses the membrane as a helical span at residues 117–137 (VLVVLVFALSIGALVIYFIDS). Topologically, residues 138–152 (SNPIESCQNFYKDFT) are extracellular. A helical transmembrane segment spans residues 153–173 (LQIDMAFNVFFLLYFGLRFIA). Topologically, residues 174–177 (ANDN) are cytoplasmic. A helical membrane pass occupies residues 178-198 (LWFWLEVNSVVDFFTVPPVFV). At 199 to 202 (SVYL) the chain is on the extracellular side. The chain crosses the membrane as a helical; Voltage-sensor span at residues 203 to 223 (NRSWLGLRFLRALRLIQFSEI). At 224-238 (LQFLNILKTSNSIKL) the chain is on the cytoplasmic side. The chain crosses the membrane as a helical span at residues 239-259 (VNLLSIFISTWLTAAGFIHLV). At 260-273 (ENSGDPWENFQNSQ) the chain is on the extracellular side. Positions 274–296 (ALTYWECVYLLMVTMSTVGYGDV) form an intramembrane region, pore-forming. A Selectivity for potassium motif is present at residues 290–293 (TVGY). Residues 297–305 (YAKTTPGGL) lie on the Extracellular side of the membrane. A helical transmembrane segment spans residues 306–326 (FIVFFILGGLAMFASYVPEII). At 327 to 1159 (EIIGNRKKYG…PPIREVEDEC (833 aa)) the chain is on the cytoplasmic side. The RCK N-terminal 1 domain maps to 345–487 (RKHIVVCGHI…WNWKEGDDAI (143 aa)). Positions 377, 400, and 402 each coordinate Mg(2+). The segment at 494 to 514 (LGFIAQSCLAQGLSTMLANLF) is segment S7. The tract at residues 551–571 (LSFPTVCELCFVKLKLLMIAI) is segment S8. The segment at 615–619 (CKACH) is heme-binding motif. Positions 639–668 (EQPSTLSPKKKQRNGGMRNSPSSSPKLMRH) are disordered. T643 bears the Phosphothreonine mark. Residues S645, S658, and S662 each carry the phosphoserine modification. Residues 717–737 (VLSGHVVVCIFGHVSSALIGL) form a segment S9 region. In terms of domain architecture, RCK N-terminal 2 spans 719–863 (SGHVVVCIFG…MDKSSPDNSP (145 aa)). T850 is subject to Phosphothreonine. Residues S858 and S862 each carry the phosphoserine modification. Residues 883 to 905 (TELVNDTNVQFLDQDDDDDPDTE) carry the Calcium bowl motif. Residues Q892, D895, D898, and D900 each contribute to the Ca(2+) site. The tract at residues 912–932 (FACGTAFAVSVLDSLMSATYF) is segment S10. Residues 1066 to 1091 (RASLSHSSHSSQSSSKKSSSVHSIPS) are compositionally biased toward low complexity. The tract at residues 1066-1124 (RASLSHSSHSSQSSSKKSSSVHSIPSTANRQNRPKSRESRDKQTEKKWFTDEPDNAYPR) is disordered. Basic and acidic residues predominate over residues 1100–1115 (KSRESRDKQTEKKWFT). 2 positions are modified to phosphoserine: S1101 and S1104.

The protein belongs to the potassium channel family. Calcium-activated (TC 1.A.1.3) subfamily. KCa1.1/KCNMA1 sub-subfamily. In terms of assembly, homotetramer; which constitutes the calcium-activated potassium channel. Interacts with beta subunits KCNMB1, KCNMB2, KCNMB3 and KCNMB4. Interacts with gamma subunits LRRC26, LRRC38, LRRC52 and LRRC55. Beta and gamma subunits are accessory, and modulate its activity. Interacts with RAB11B. Post-translationally, phosphorylated. Phosphorylation by kinases such as PKA and/or PKG. In smooth muscles, phosphorylation affects its activity. Palmitoylation by ZDHHC22 and ZDHHC23 within the intracellular linker between the S0 and S1 transmembrane domains regulates localization to the plasma membrane. Depalmitoylated by LYPLA1 and LYPLAL1, leading to retard exit from the trans-Golgi network. In terms of tissue distribution, expressed in all vascular and smooth muscles.

It localises to the cell membrane. It catalyses the reaction K(+)(in) = K(+)(out). With respect to regulation, ethanol and carbon monoxide-bound heme increase channel activation. Heme inhibits channel activation. Potassium channel activated by both membrane depolarization or increase in cytosolic Ca(2+) that mediates export of K(+). It is also activated by the concentration of cytosolic Mg(2+). Its activation dampens the excitatory events that elevate the cytosolic Ca(2+) concentration and/or depolarize the cell membrane. It therefore contributes to repolarization of the membrane potential. Plays a key role in controlling excitability in a number of systems, such as regulation of the contraction of smooth muscle, the tuning of hair cells in the cochlea, regulation of transmitter release, and innate immunity. In smooth muscles, its activation by high level of Ca(2+), caused by ryanodine receptors in the sarcoplasmic reticulum, regulates the membrane potential. In cochlea cells, its number and kinetic properties partly determine the characteristic frequency of each hair cell and thereby helps to establish a tonotopic map. Kinetics of KCNMA1 channels are determined by alternative splicing, phosphorylation status and its combination with modulating beta subunits. Highly sensitive to both iberiotoxin (IbTx) and charybdotoxin (CTX). The sequence is that of Calcium-activated potassium channel subunit alpha-1 (KCNMA1) from Canis lupus familiaris (Dog).